The chain runs to 170 residues: Putative 3-methyladenine DNA glycosylase (170 aa).

This sequence belongs to the DNA glycosylase MPG family.

This chain is Putative 3-methyladenine DNA glycosylase, found in Sodalis glossinidius.